The primary structure comprises 265 residues: Capsule polysaccharide export inner-membrane protein BexB (265 aa).

Transmembrane regions (helical) follow at residues 37–57 (IGFL…VMMW), 64–84 (KFST…AMMW), 121–141 (VAGA…IGWI), 148–168 (FYML…GLII), 178–198 (FGKI…AFFF), and 235–255 (ESIG…LVMV). The ABC transmembrane type-2 domain maps to 37-258 (IGFLWLFVEP…LMGLVMVKNF (222 aa)).

This sequence belongs to the ABC-2 integral membrane protein family.

It localises to the cell inner membrane. May form an ATP-driven capsule polysaccharide export apparatus, in association with the BexA, BexC and BexD proteins. This is Capsule polysaccharide export inner-membrane protein BexB (bexB) from Haemophilus influenzae.